The sequence spans 406 residues: Serine/threonine transporter SstT (406 aa).

Transmembrane regions (helical) follow at residues Leu-15–Ser-35, Phe-47–Ile-67, Ile-81–Phe-101, Ala-140–Leu-160, Phe-191–Gly-211, Leu-215–Val-235, Ile-289–Leu-309, Met-315–Ala-335, and Ile-362–Thr-382.

It belongs to the dicarboxylate/amino acid:cation symporter (DAACS) (TC 2.A.23) family.

It localises to the cell inner membrane. It catalyses the reaction L-serine(in) + Na(+)(in) = L-serine(out) + Na(+)(out). It carries out the reaction L-threonine(in) + Na(+)(in) = L-threonine(out) + Na(+)(out). In terms of biological role, involved in the import of serine and threonine into the cell, with the concomitant import of sodium (symport system). The polypeptide is Serine/threonine transporter SstT (Vibrio vulnificus (strain YJ016)).